The following is a 521-amino-acid chain: Feruloyl esterase B (521 aa).

The signal sequence occupies residues 1 to 17 (MKVASLLSLALPGAALA). Disulfide bonds link cysteine 26-cysteine 72 and cysteine 61-cysteine 111. N-linked (GlcNAc...) asparagine glycosylation is found at asparagine 37, asparagine 51, asparagine 77, asparagine 95, asparagine 144, and asparagine 177. Intrachain disulfides connect cysteine 184-cysteine 438, cysteine 253-cysteine 270, and cysteine 279-cysteine 288. The active-site Acyl-ester intermediate is the serine 185. Positions 254, 257, 259, 261, and 263 each coordinate Ca(2+). Residues asparagine 284, asparagine 347, asparagine 352, and asparagine 378 are each glycosylated (N-linked (GlcNAc...) asparagine). Residues aspartate 397 and histidine 437 each act as charge relay system in the active site. N-linked (GlcNAc...) asparagine glycans are attached at residues asparagine 488 and asparagine 511. Cysteine 498 and cysteine 520 are joined by a disulfide.

The protein belongs to the tannase family. As to quaternary structure, homodimer. In terms of processing, glycosylated.

The protein resides in the secreted. It carries out the reaction feruloyl-polysaccharide + H2O = ferulate + polysaccharide.. With respect to regulation, inhibited by the specific serine esterase inhibitor AEBSF. Functionally, involved in degradation of plant cell walls. Hydrolyzes of the feruloyl-arabinose ester bond in arabinoxylans as well as the feruloyl-galactose and feruloyl-arabinose ester bonds in pectin. This Aspergillus niger protein is Feruloyl esterase B (faeB).